We begin with the raw amino-acid sequence, 257 residues long: 1-(5-phosphoribosyl)-5-[(5-phosphoribosylamino)methylideneamino] imidazole-4-carboxamide isomerase (257 aa).

Catalysis depends on Asp-8, which acts as the Proton acceptor. Residue Asp-129 is the Proton donor of the active site.

This sequence belongs to the HisA/HisF family.

It localises to the cytoplasm. The catalysed reaction is 1-(5-phospho-beta-D-ribosyl)-5-[(5-phospho-beta-D-ribosylamino)methylideneamino]imidazole-4-carboxamide = 5-[(5-phospho-1-deoxy-D-ribulos-1-ylimino)methylamino]-1-(5-phospho-beta-D-ribosyl)imidazole-4-carboxamide. It participates in amino-acid biosynthesis; L-histidine biosynthesis; L-histidine from 5-phospho-alpha-D-ribose 1-diphosphate: step 4/9. The polypeptide is 1-(5-phosphoribosyl)-5-[(5-phosphoribosylamino)methylideneamino] imidazole-4-carboxamide isomerase (Rippkaea orientalis (strain PCC 8801 / RF-1) (Cyanothece sp. (strain PCC 8801))).